A 288-amino-acid polypeptide reads, in one-letter code: Heme oxygenase 1 (288 aa).

Topologically, residues 1–265 (MERPQPDSMP…KTPLNTHSQA (265 aa)) are cytoplasmic. Heme b contacts are provided by Lys-18, His-25, Tyr-134, and Arg-183. The tract at residues 223–260 (HDTKDQSPSRAPGLRQRASNKAQDSAPVETPRGKTPLN) is disordered. Position 229 is a phosphoserine (Ser-229). Residues 266-288 (PLLRWVLTLSFLVATVAVGLYAM) form a helical; Anchor for type IV membrane protein membrane-spanning segment.

The protein belongs to the heme oxygenase family. As to quaternary structure, homodimer and higher order homooligomer. Oligomerization is crucial for its stability and function in the endoplasmic reticulum. Interacts with FLVCR2; this interaction is potentiated in the presence of heme. A soluble form arises by proteolytic removal of the membrane anchor.

The protein localises to the endoplasmic reticulum membrane. The catalysed reaction is heme b + 3 reduced [NADPH--hemoprotein reductase] + 3 O2 = biliverdin IXalpha + CO + Fe(2+) + 3 oxidized [NADPH--hemoprotein reductase] + 3 H2O + H(+). Functionally, catalyzes the oxidative cleavage of heme at the alpha-methene bridge carbon, released as carbon monoxide (CO), to generate biliverdin IXalpha, while releasing the central heme iron chelate as ferrous iron. Affords protection against programmed cell death and this cytoprotective effect relies on its ability to catabolize free heme and prevent it from sensitizing cells to undergo apoptosis. Catalyzes the oxidative cleavage of heme at the alpha-methene bridge carbon, released as carbon monoxide (CO), to generate biliverdin IXalpha, while releasing the central heme iron chelate as ferrous iron. This is Heme oxygenase 1 (HMOX1) from Pongo abelii (Sumatran orangutan).